The sequence spans 514 residues: Importin subunit alpha-3 (514 aa).

Residues 1–51 (MSSNRQAYYKNNAKEQIGKEKRNEEVVSIRKDKREEAISKRRNINTQIEDD) enclose the IBB domain. Residues 1–62 (MSSNRQAYYK…ETSTTPPGPF (62 aa)) are disordered. Positions 12 to 39 (NAKEQIGKEKRNEEVVSIRKDKREEAIS) are enriched in basic and acidic residues. ARM repeat units follow at residues 101–142 (IDDL…TSEQ), 143–187 (TQAV…FRDY), 188–226 (CLEL…CKDP), 227–271 (APSP…EHIQ), 272–311 (MVIE…TDEQ), 312–353 (TQLV…NQQQ), 354–393 (VQDV…ISGR), and 394–436 (PNQV…KMAG). The interval 485 to 514 (GNVEGAQSSAFGGDVPPVPDAPNGGWNFGK) is disordered.

It belongs to the importin alpha family. In terms of assembly, forms a complex with an importin beta subunit. May interact with transcription factor cebp-1 (via N-terminus). Interacts with cmk-1; affinity for cmk-1 is increased in the presence of Ca(2+) and calmodulin and leads to increased nuclear accumulation of cmk-1 in FLP neurons upon prolonged heat activation. Expressed in larval and adult germline and somatic tissues, including neurons.

It is found in the cytoplasm. Its subcellular location is the nucleus. Binds specifically and directly to substrates containing either a simple or bipartite NLS motif. Promotes docking of import substrates to the nuclear envelope. Seems to act as a cytosolic receptor for both simple and bipartite NLS motifs. Necessary for correct nucleoporin localization within the germline. Essential gene for embryonic and larval development. May be dispensable for axon development, but required for axon regeneration in both mechanosensory and motor neurons. Required for oogenic development, ima-1 and ima-2 cannot functionally compensate for loss of ima-3. The chain is Importin subunit alpha-3 (ima-3) from Caenorhabditis elegans.